We begin with the raw amino-acid sequence, 348 residues long: tRNA N6-adenosine threonylcarbamoyltransferase (348 aa).

H116 and H120 together coordinate Fe cation. Substrate is bound by residues 138-142, D171, G184, D188, and N277; that span reads QVSGG. D309 is a binding site for Fe cation.

This sequence belongs to the KAE1 / TsaD family. Fe(2+) serves as cofactor.

It is found in the cytoplasm. It carries out the reaction L-threonylcarbamoyladenylate + adenosine(37) in tRNA = N(6)-L-threonylcarbamoyladenosine(37) in tRNA + AMP + H(+). Required for the formation of a threonylcarbamoyl group on adenosine at position 37 (t(6)A37) in tRNAs that read codons beginning with adenine. Is involved in the transfer of the threonylcarbamoyl moiety of threonylcarbamoyl-AMP (TC-AMP) to the N6 group of A37, together with TsaE and TsaB. TsaD likely plays a direct catalytic role in this reaction. In Lactobacillus johnsonii (strain CNCM I-12250 / La1 / NCC 533), this protein is tRNA N6-adenosine threonylcarbamoyltransferase.